A 117-amino-acid polypeptide reads, in one-letter code: Large ribosomal subunit protein uL18 (117 aa).

The protein belongs to the universal ribosomal protein uL18 family. In terms of assembly, part of the 50S ribosomal subunit; part of the 5S rRNA/L5/L18/L25 subcomplex. Contacts the 5S and 23S rRNAs.

In terms of biological role, this is one of the proteins that bind and probably mediate the attachment of the 5S RNA into the large ribosomal subunit, where it forms part of the central protuberance. This Leuconostoc citreum (strain KM20) protein is Large ribosomal subunit protein uL18.